The primary structure comprises 859 residues: Catenin delta-1 (859 aa).

Residues 15–44 (SVRAQEAQFELLSRALEEERRHVTAQLDRV) are a coiled coil. The disordered stretch occupies residues 226-254 (IDGPDYATTGRRGANGGDPRRRLRSYEDP). A compositionally biased stretch (basic and acidic residues) spans 243–254 (DPRRRLRSYEDP). ARM repeat units follow at residues 279–317 (APNS…HLSY), 320–359 (EDVK…NLSY), 363–401 (RENK…VTGT), 402–446 (LWNL…RVEG), 464–503 (LRNI…LVDS), 513–552 (LRNI…VRRG), 574–614 (AQGY…NLCA), 621–660 (RCIR…NLCG), 661–700 (DNRN…CVIN), and 701–746 (TIHE…GFCL).

This sequence belongs to the beta-catenin family. In terms of assembly, interacts with C-cadherin and with zbtb33. In terms of tissue distribution, ubiquitously expressed.

The protein resides in the cell junction. Its subcellular location is the adherens junction. It localises to the cytoplasm. The protein localises to the nucleus. It is found in the cell membrane. Functionally, key regulator of cell-cell adhesion that associates with and regulates the cell adhesion properties of both C-, E- and N-cadherins, being critical for their surface stability. Beside cell-cell adhesion, regulates gene transcription through several transcription factors including ZBTB33/Kaiso2 and GLIS2, and the activity of Rho family GTPases and downstream cytoskeletal dynamics. Implicated both in cell transformation by SRC and in ligand-induced receptor signaling through the EGF, PDGF, CSF-1 and ERBB2 receptors. Required for gastrulation, axial elongation and development of the craniofacial skeleton and eye. This chain is Catenin delta-1 (ctnnd1), found in Xenopus laevis (African clawed frog).